The following is a 418-amino-acid chain: Protease LasA (418 aa).

The first 31 residues, 1 to 31 (MQHKRSRALASPRSPFLFALLALAVGGTANA), serve as a signal peptide directing secretion. The propeptide occupies 32–236 (HDDGLPAFRY…ARQLQAKAAL (205 aa)). 2 residues coordinate Zn(2+): H259 and D272. The cysteines at positions 301 and 347 are disulfide-linked. Residues H317 and H356 each act as proton donor/acceptor in the active site. H358 contacts Zn(2+). A disulfide bridge links C391 with C406.

The protein belongs to the peptidase M23A family. Zn(2+) serves as cofactor.

The protein resides in the secreted. Its function is as follows. Involved in proteolysis and elastolysis (degradation of the host protein elastin). Has staphylolytic activity (degrades pentaglycine cross-links in cell wall peptidoglycan), preferring Gly-Gly-|-X substrates where X is Ala or Gly. Enhances the elastolytic but not proteolytic activity of elastase (lasB) and elastolytic activity of other proteases. Degradation of elastin is likely to contribute to the pathogenicity of P.aeruginosa. This Pseudomonas aeruginosa (strain UCBPP-PA14) protein is Protease LasA (lasA).